The chain runs to 2515 residues: Protein tudor (2515 aa).

Residues serine 226, serine 235, and serine 239 each carry the phosphoserine modification. 2 Tudor domains span residues 455 to 513 and 641 to 696; these read APEL…LLEI and QLIL…HLEM. Serine 800 carries the phosphoserine modification. The tract at residues 840-996 is disordered; the sequence is QAVKSVSGSK…SSSESVAAAK (157 aa). Low complexity predominate over residues 890-900; that stretch reads STGSYSSGMSS. A compositionally biased stretch (polar residues) spans 906–917; that stretch reads RQQNGRTPIQSP. The segment covering 918–927 has biased composition (basic and acidic residues); that stretch reads RHNEKQEAKK. Composition is skewed to polar residues over residues 943-954 and 964-976; these read GQQGNQRSQNAP and QKSTLDGNISSKR. Residues 977 to 995 show a composition bias toward low complexity; that stretch reads SSGVGSDIASSSSESVAAA. 2 consecutive Tudor domains span residues 1062–1122 and 1355–1414; these read QLKV…FADP and KFDV…FYEH. Residues 1515-1589 are disordered; sequence EEDKGRKETV…KPATPVPEVV (75 aa). Over residues 1540–1553 the composition is skewed to basic and acidic residues; the sequence is NDKDREPKKSKPAE. Over residues 1569–1584 the composition is skewed to pro residues; it reads SPVPAEPAPVPKPATP. Tudor domains are found at residues 1662 to 1718, 1839 to 1898, 2023 to 2082, 2211 to 2269, and 2392 to 2451; these read NVVN…SHIE, GFEK…SLPS, KAAV…LIKP, TTNS…PIPS, and DLKE…KPAR.

In terms of assembly, may form part of a piRNA processing complex consisting of tud, aub and AGO3. Interacts with AGO3 (when symmetrically dimethylated on Arg residues) and aub (when symmetrically dimethylated on Arg residues). Interacts with vls. Interacts with me31B/DDX6 (when symmetrically dimethylated on Arg residues).

The protein resides in the cytoplasm. Its subcellular location is the perinuclear region. It localises to the cytoplasmic ribonucleoprotein granule. In terms of biological role, may act via the Piwi-interacting RNA (piRNA) metabolic process mediated by aub and AGO3 Piwi proteins, which mediates the repression of transposable elements during meiosis by forming complexes composed of piRNAs and Piwi proteins and governs the methylation and subsequent repression of transposons. Required during oogenesis for the formation of primordial germ cells and for normal abdominal segmentation. Not involved in repression of retroelements. This Drosophila melanogaster (Fruit fly) protein is Protein tudor.